Reading from the N-terminus, the 426-residue chain is Enolase (426 aa).

Residue Gln163 participates in (2R)-2-phosphoglycerate binding. Glu205 serves as the catalytic Proton donor. The Mg(2+) site is built by Asp242, Glu283, and Asp310. (2R)-2-phosphoglycerate-binding residues include Lys335, Arg364, Ser365, and Lys386. Lys335 serves as the catalytic Proton acceptor.

This sequence belongs to the enolase family. Requires Mg(2+) as cofactor.

The protein localises to the cytoplasm. It localises to the secreted. Its subcellular location is the cell surface. The catalysed reaction is (2R)-2-phosphoglycerate = phosphoenolpyruvate + H2O. It functions in the pathway carbohydrate degradation; glycolysis; pyruvate from D-glyceraldehyde 3-phosphate: step 4/5. Its function is as follows. Catalyzes the reversible conversion of 2-phosphoglycerate (2-PG) into phosphoenolpyruvate (PEP). It is essential for the degradation of carbohydrates via glycolysis. This Cutibacterium acnes (strain DSM 16379 / KPA171202) (Propionibacterium acnes) protein is Enolase.